A 188-amino-acid polypeptide reads, in one-letter code: UPF0301 protein ABO_0112 (188 aa).

Belongs to the UPF0301 (AlgH) family.

The chain is UPF0301 protein ABO_0112 from Alcanivorax borkumensis (strain ATCC 700651 / DSM 11573 / NCIMB 13689 / SK2).